Reading from the N-terminus, the 207-residue chain is SPRY domain-containing protein 4 (207 aa).

Residues 12–207 form the B30.2/SPRY domain; sequence YRWGTKRWGV…HSGLEVPKGL (196 aa). N6-acetyllysine is present on residues Lys53 and Lys130. Lys139 is subject to N6-succinyllysine.

The polypeptide is SPRY domain-containing protein 4 (Spryd4) (Rattus norvegicus (Rat)).